Here is a 273-residue protein sequence, read N- to C-terminus: Multidrug-efflux transporter 2 regulator (273 aa).

An HTH merR-type domain is found at tyrosine 8–glycine 77. The H-T-H motif DNA-binding region spans threonine 11–glutamate 30.

Its function is as follows. Activates transcription of the blt gene in response to structurally dissimilar drugs. The chain is Multidrug-efflux transporter 2 regulator (bltR) from Bacillus subtilis (strain 168).